The chain runs to 1648 residues: Cortactin-binding protein 2 (1648 aa).

Disordered regions lie at residues 1–26, 200–250, 322–439, 451–476, and 492–608; these read MATDSASCEPDLSRTPGDTEGATAEA, EEKK…EEAH, PLTV…PGLN, GNANDPDQNGNNTQSPPSRDVSPTSR, and ALSR…PSID. Positions 119-274 form a coiled coil; it reads KMQERMSAQL…MEQMKKGSDG (156 aa). Basic and acidic residues-rich tracts occupy residues 200-218 and 225-250; these read EEKKKTSELEEQLSAEKQR and QLEKQLSEFDTEREQLRAKLSREEAH. Composition is skewed to polar residues over residues 330 to 342 and 372 to 392; these read STGSPLVPTNTKG and LPSSANRIEENGPSTGNAPDL. Low complexity predominate over residues 393–415; the sequence is SNSTPSTPSSTAPAAAQTPGTAP. A compositionally biased stretch (polar residues) spans 492–503; sequence ALSRFTSPQAGA. Arg495 is subject to Asymmetric dimethylarginine. ANK repeat units lie at residues 699–729, 733–762, 766–795, 799–828, 832–861, and 901–931; these read GRPTLLQQAAAQGNVTLLSMLLNEEGLDINY, DGHSALYSAAKNGHTDCVRLLLNAEARVDA, NGFTPLCVAAAQGHFECIELLTAYNANINH, GGQTPLYLACKNGNKECIKLLLEAGTDRSI, DGWTPIHAAVDTGNVDSLKLLMYHRVRAHG, and EGWTAAHIAASKGFKNCLEVLCRHGGLEPER. The disordered stretch occupies residues 1438–1492; sequence SGAWRKVNTSPRKKPGHFSSPTWNKPDPKREGMRNKTIPHLNTNRNSSLSKQQSL. Positions 1477-1492 are enriched in polar residues; sequence HLNTNRNSSLSKQQSL. The residue at position 1510 (Ser1510) is a Phosphoserine. Residues 1522–1648 form a disordered region; it reads SMCSSKSESD…KHEQVEKPNK (127 aa). Basic and acidic residues predominate over residues 1528 to 1547; sequence SESDISKIADSRDDLRKFDS. 2 stretches are compositionally biased toward polar residues: residues 1548-1557 and 1571-1584; these read SRTNPGTSAP and PPSSRQTAECSNSK. Positions 1609-1623 are enriched in low complexity; sequence SQNTKRNSSSSNTRQ. The span at 1630–1648 shows a compositional bias: basic and acidic residues; it reads SKEENWTLDKHEQVEKPNK.

Interacts with CTTN/cortactin SH3 domain. Interacts with STRN, STRN4/zinedin and MOB4/phocein; this interactions mediate the association with the STRIPAK core complex and may regulate dendritic spine distribution of the STRIPAK complex in hippocampal neurons. Activation of glutamate receptors weakens the interaction with STRN and STRN4. Isoform 2 is predominantly expressed in brain (at protein level). In the brain, expressed at high levels in hypothalamus and striatum and at lower levels in cerebellum and cortex.

It is found in the cytoplasm. Its subcellular location is the cell cortex. The protein resides in the cell projection. It localises to the dendritic spine. Its function is as follows. Regulates the dendritic spine distribution of CTTN/cortactin in hippocampal neurons, and thus controls dendritic spinogenesis and dendritic spine maintenance. Associates with the striatin-interacting phosphatase and kinase (STRIPAK) core complex to regulate dendritic spine distribution of the STRIPAK complex in hippocampal neurons. The polypeptide is Cortactin-binding protein 2 (Cttnbp2) (Mus musculus (Mouse)).